We begin with the raw amino-acid sequence, 263 residues long: 3-deoxy-manno-octulosonate cytidylyltransferase (263 aa).

The protein belongs to the KdsB family.

The protein resides in the cytoplasm. The catalysed reaction is 3-deoxy-alpha-D-manno-oct-2-ulosonate + CTP = CMP-3-deoxy-beta-D-manno-octulosonate + diphosphate. It functions in the pathway nucleotide-sugar biosynthesis; CMP-3-deoxy-D-manno-octulosonate biosynthesis; CMP-3-deoxy-D-manno-octulosonate from 3-deoxy-D-manno-octulosonate and CTP: step 1/1. It participates in bacterial outer membrane biogenesis; lipopolysaccharide biosynthesis. Activates KDO (a required 8-carbon sugar) for incorporation into bacterial lipopolysaccharide in Gram-negative bacteria. The sequence is that of 3-deoxy-manno-octulosonate cytidylyltransferase from Burkholderia multivorans (strain ATCC 17616 / 249).